A 187-amino-acid polypeptide reads, in one-letter code: Large ribosomal subunit protein uL5 (187 aa).

This sequence belongs to the universal ribosomal protein uL5 family. Part of the 50S ribosomal subunit; part of the 5S rRNA/L5/L18/L25 subcomplex. Contacts the 5S rRNA and the P site tRNA. Forms a bridge to the 30S subunit in the 70S ribosome.

Functionally, this is one of the proteins that bind and probably mediate the attachment of the 5S RNA into the large ribosomal subunit, where it forms part of the central protuberance. In the 70S ribosome it contacts protein S13 of the 30S subunit (bridge B1b), connecting the 2 subunits; this bridge is implicated in subunit movement. Contacts the P site tRNA; the 5S rRNA and some of its associated proteins might help stabilize positioning of ribosome-bound tRNAs. This chain is Large ribosomal subunit protein uL5, found in Roseobacter denitrificans (strain ATCC 33942 / OCh 114) (Erythrobacter sp. (strain OCh 114)).